The sequence spans 35 residues: Coenzyme PQQ synthesis protein A (35 aa).

The segment at residues 16–20 (EINMY) is a cross-link (pyrroloquinoline quinone (Glu-Tyr)).

This sequence belongs to the PqqA family.

It participates in cofactor biosynthesis; pyrroloquinoline quinone biosynthesis. Required for coenzyme pyrroloquinoline quinone (PQQ) biosynthesis. PQQ is probably formed by cross-linking a specific glutamate to a specific tyrosine residue and excising these residues from the peptide. This chain is Coenzyme PQQ synthesis protein A, found in Roseobacter denitrificans (strain ATCC 33942 / OCh 114) (Erythrobacter sp. (strain OCh 114)).